Reading from the N-terminus, the 135-residue chain is UPF0102 protein PGN_1801 (135 aa).

Belongs to the UPF0102 family.

This Porphyromonas gingivalis (strain ATCC 33277 / DSM 20709 / CIP 103683 / JCM 12257 / NCTC 11834 / 2561) protein is UPF0102 protein PGN_1801.